Here is a 398-residue protein sequence, read N- to C-terminus: Na(+)/H(+) antiporter NhaA (398 aa).

Transmembrane regions (helical) follow at residues 8-28 (FLQL…LALI), 59-79 (LLLW…GMEI), 96-116 (LPVI…SFII), 124-144 (AGWA…LSLL), 154-174 (VFLL…IALF), 177-197 (AELH…LLML), 202-222 (VMLL…VLKS), 223-243 (GVHA…IRGA), 261-281 (YFIL…GLSW), 292-312 (IIVG…WLAV), 328-348 (LFGL…IGGL), and 362-382 (LGIL…LRNA).

It belongs to the NhaA Na(+)/H(+) (TC 2.A.33) antiporter family.

Its subcellular location is the cell inner membrane. It catalyses the reaction Na(+)(in) + 2 H(+)(out) = Na(+)(out) + 2 H(+)(in). Its function is as follows. Na(+)/H(+) antiporter that extrudes sodium in exchange for external protons. This chain is Na(+)/H(+) antiporter NhaA, found in Tolumonas auensis (strain DSM 9187 / NBRC 110442 / TA 4).